The primary structure comprises 591 residues: Aspartate--tRNA ligase (591 aa).

E173 contributes to the L-aspartate binding site. The segment at 197-200 (QLFK) is aspartate. Residue R219 participates in L-aspartate binding. ATP-binding positions include 219 to 221 (RDE) and Q228. H448 is a binding site for L-aspartate. An ATP-binding site is contributed by E482. R489 lines the L-aspartate pocket. ATP is bound at residue 534-537 (GLDR).

The protein belongs to the class-II aminoacyl-tRNA synthetase family. Type 1 subfamily. As to quaternary structure, homodimer.

It is found in the cytoplasm. It catalyses the reaction tRNA(Asp) + L-aspartate + ATP = L-aspartyl-tRNA(Asp) + AMP + diphosphate. In terms of biological role, catalyzes the attachment of L-aspartate to tRNA(Asp) in a two-step reaction: L-aspartate is first activated by ATP to form Asp-AMP and then transferred to the acceptor end of tRNA(Asp). The protein is Aspartate--tRNA ligase of Shewanella sp. (strain ANA-3).